The primary structure comprises 272 residues: uncharacterized protein (272 aa).

6 consecutive transmembrane segments (helical) span residues 20-37 (VYLS…NLLI), 57-77 (HPLT…HFSL), 97-119 (LNVS…IMLM), 155-177 (SIAT…YVIF), 184-203 (LVSL…VTLG), and 234-256 (PYSI…WLVI).

The protein localises to the cell membrane. This is an uncharacterized protein from Halalkalibacterium halodurans (strain ATCC BAA-125 / DSM 18197 / FERM 7344 / JCM 9153 / C-125) (Bacillus halodurans).